The primary structure comprises 311 residues: Aspartate carbamoyltransferase catalytic subunit (311 aa).

Positions 55 and 56 each coordinate carbamoyl phosphate. An L-aspartate-binding site is contributed by K85. Residues R106, H135, and Q138 each contribute to the carbamoyl phosphate site. Residues R168 and R230 each contribute to the L-aspartate site. Residues L268 and P269 each contribute to the carbamoyl phosphate site.

This sequence belongs to the aspartate/ornithine carbamoyltransferase superfamily. ATCase family. Heterododecamer (2C3:3R2) of six catalytic PyrB chains organized as two trimers (C3), and six regulatory PyrI chains organized as three dimers (R2).

The catalysed reaction is carbamoyl phosphate + L-aspartate = N-carbamoyl-L-aspartate + phosphate + H(+). The protein operates within pyrimidine metabolism; UMP biosynthesis via de novo pathway; (S)-dihydroorotate from bicarbonate: step 2/3. Functionally, catalyzes the condensation of carbamoyl phosphate and aspartate to form carbamoyl aspartate and inorganic phosphate, the committed step in the de novo pyrimidine nucleotide biosynthesis pathway. The protein is Aspartate carbamoyltransferase catalytic subunit of Salmonella paratyphi A (strain AKU_12601).